Consider the following 86-residue polypeptide: Secreted transmembrane peptide 6 (86 aa).

The first 31 residues, 1 to 31, serve as a signal peptide directing secretion; the sequence is MGMKSPNIAAFMLPLLLILFTLSSQLKVVES. An SCOOP motif motif is present at residues 45–58; sequence IVYTPPSRSCGTSP. The SxS motif essential for MIK2 binding motif lies at 51–53; the sequence is SRS.

It belongs to the serine rich endogenous peptide (SCOOP) phytocytokine family. Interacts with MIK2 (via extracellular leucine-rich repeat domain); this interaction triggers the formation of complex between MIK2 and the BAK1/SERK3 and SERK4 coreceptors, and subsequent BAK1 activation by phosphorylation. In terms of tissue distribution, mostly expressed in leaves, and, to a lower extent, in roots, stems, siliques, seeds and flowers.

Its subcellular location is the cell membrane. It localises to the secreted. The protein localises to the extracellular space. The protein resides in the apoplast. Brassicaceae-specific phytocytokine (plant endogenous peptide released into the apoplast) perceived by MIK2 in a BAK1/SERK3 and SERK4 coreceptors-dependent manner, that modulates various physiological and antimicrobial processes including growth prevention and reactive oxygen species (ROS) response regulation. Prevents general growth and development. The polypeptide is Secreted transmembrane peptide 6 (Arabidopsis thaliana (Mouse-ear cress)).